Here is a 409-residue protein sequence, read N- to C-terminus: MFNMNLLSTPSSEEGSPQNRSSSMSSVEGKKDRDTFTNLQNEFDGKVFGVSLEESLKVAQEEVIIQKSTNEIGSIPVVIAKSGKYLKENALDTTGIFRIAGSNKRVRELQAVFSKPPDYGRKFEGWCDFNVHDIATLLKRYLNSLSEPLVPLALYDIFRNPILENPKINEHKEQIIKDYEDIYMLLPQQNRHLILYLAALLNLFARNEKKNLMSASNLAAIVQPSLLSHPKDEMCPKEYEASRTVIEFLILHASDIIPNTEKANKDTMPHAGTVAKFNNITVPEMAIDSDEEDFVHPSIDDHMLPRSRALSDSNNFTIHHHHHHHHALFPSPIDFDNNGLSVPRSFKGRTLSAESLSPRLSKLLGNVGNSSNTGIKDPTERVPRGEHKTKHKQRQSWLRRLTSPSRTQP.

Positions 1–26 (MFNMNLLSTPSSEEGSPQNRSSSMSS) are enriched in polar residues. The interval 1 to 32 (MFNMNLLSTPSSEEGSPQNRSSSMSSVEGKKD) is disordered. The region spanning 50–257 (VSLEESLKVA…FLILHASDII (208 aa)) is the Rho-GAP domain. The segment at 362-409 (KLLGNVGNSSNTGIKDPTERVPRGEHKTKHKQRQSWLRRLTSPSRTQP) is disordered. Positions 377–386 (DPTERVPRGE) are enriched in basic and acidic residues.

As to quaternary structure, interacts with RHO1.

Functionally, acts in signal transduction. Activates RHO1. In Saccharomyces cerevisiae (strain ATCC 204508 / S288c) (Baker's yeast), this protein is Rho-GTPase-activating protein BAG7 (BAG7).